Consider the following 527-residue polypeptide: N-acetylglutamate synthase, mitochondrial (527 aa).

The transit peptide at 1 to 18 (MATAWVATALRSAAAARR) directs the protein to the mitochondrion. The segment at 14–91 (AAARRLRSPG…PLESPAPPAG (78 aa)) is disordered. Positions 19-369 (LRSPGGPGGS…CGTLFKNAER (351 aa)) are amino-acid kinase domain (AAK). Basic and acidic residues predominate over residues 54–63 (AHAEDAEGAK). Pro residues predominate over residues 77-89 (TPLPTPLESPAPP). The N-acetyltransferase domain occupies 368–519 (ERMLRVRNLD…HAKGLPDSFC (152 aa)). Substrate-binding positions include Lys394, Lys437, and 467–472 (RSRVTN).

Belongs to the acetyltransferase family. In terms of assembly, homodimer. Homotetramer. Post-translationally, probably processed by mitochondrial processing peptidase (MPP). The long form has not yet been isolated. In terms of tissue distribution, highly expressed in the liver and small intestine. Weakly expressed in the kidney, spleen and testis.

The protein resides in the mitochondrion matrix. It carries out the reaction L-glutamate + acetyl-CoA = N-acetyl-L-glutamate + CoA + H(+). It functions in the pathway amino-acid biosynthesis; L-arginine biosynthesis; N(2)-acetyl-L-ornithine from L-glutamate: step 1/4. Its activity is regulated as follows. Increased by L-arginine. Plays a role in the regulation of ureagenesis by producing the essential cofactor N-acetylglutamate (NAG), thus modulating carbamoylphosphate synthase I (CPS1) activity. In Mus musculus (Mouse), this protein is N-acetylglutamate synthase, mitochondrial (Nags).